The following is a 612-amino-acid chain: Dihydroxy-acid dehydratase (612 aa).

Asp-81 is a Mg(2+) binding site. Cys-122 contributes to the [2Fe-2S] cluster binding site. Mg(2+) is bound by residues Asp-123 and Lys-124. The residue at position 124 (Lys-124) is an N6-carboxylysine. Cys-195 serves as a coordination point for [2Fe-2S] cluster. Glu-491 is a Mg(2+) binding site. The active-site Proton acceptor is the Ser-517.

It belongs to the IlvD/Edd family. In terms of assembly, homodimer. Requires [2Fe-2S] cluster as cofactor. Mg(2+) serves as cofactor.

It carries out the reaction (2R)-2,3-dihydroxy-3-methylbutanoate = 3-methyl-2-oxobutanoate + H2O. The enzyme catalyses (2R,3R)-2,3-dihydroxy-3-methylpentanoate = (S)-3-methyl-2-oxopentanoate + H2O. It participates in amino-acid biosynthesis; L-isoleucine biosynthesis; L-isoleucine from 2-oxobutanoate: step 3/4. Its pathway is amino-acid biosynthesis; L-valine biosynthesis; L-valine from pyruvate: step 3/4. Functions in the biosynthesis of branched-chain amino acids. Catalyzes the dehydration of (2R,3R)-2,3-dihydroxy-3-methylpentanoate (2,3-dihydroxy-3-methylvalerate) into 2-oxo-3-methylpentanoate (2-oxo-3-methylvalerate) and of (2R)-2,3-dihydroxy-3-methylbutanoate (2,3-dihydroxyisovalerate) into 2-oxo-3-methylbutanoate (2-oxoisovalerate), the penultimate precursor to L-isoleucine and L-valine, respectively. This chain is Dihydroxy-acid dehydratase, found in Rhizobium etli (strain ATCC 51251 / DSM 11541 / JCM 21823 / NBRC 15573 / CFN 42).